Reading from the N-terminus, the 419-residue chain is 3-isopropylmalate dehydratase large subunit (419 aa).

3 residues coordinate [4Fe-4S] cluster: cysteine 300, cysteine 360, and cysteine 363.

The protein belongs to the aconitase/IPM isomerase family. LeuC type 2 subfamily. In terms of assembly, heterodimer of LeuC and LeuD. [4Fe-4S] cluster serves as cofactor.

The catalysed reaction is (2R,3S)-3-isopropylmalate = (2S)-2-isopropylmalate. Its pathway is amino-acid biosynthesis; L-leucine biosynthesis; L-leucine from 3-methyl-2-oxobutanoate: step 2/4. Functionally, catalyzes the isomerization between 2-isopropylmalate and 3-isopropylmalate, via the formation of 2-isopropylmaleate. The protein is 3-isopropylmalate dehydratase large subunit of Nitratidesulfovibrio vulgaris (strain DP4) (Desulfovibrio vulgaris).